Consider the following 76-residue polypeptide: MKKEKGSRRKKRVCAFCVDKIVDVDYKDVNRLKKYITERGKILPRRISGNCARHQRRLTTAIKRARIMALLPFTVE.

The protein belongs to the bacterial ribosomal protein bS18 family. Part of the 30S ribosomal subunit. Forms a tight heterodimer with protein bS6.

Functionally, binds as a heterodimer with protein bS6 to the central domain of the 16S rRNA, where it helps stabilize the platform of the 30S subunit. The polypeptide is Small ribosomal subunit protein bS18 (Carboxydothermus hydrogenoformans (strain ATCC BAA-161 / DSM 6008 / Z-2901)).